Here is a 687-residue protein sequence, read N- to C-terminus: Chloride channel protein ClC-Ka (687 aa).

4 helical membrane-spanning segments follow: residues 52-72 (FLMT…FAIG), 161-181 (LFLG…AYLG), 202-222 (VAAA…GVLF), and 236-256 (YWRG…LAVF). Ca(2+)-binding residues include Glu259, Glu261, Asp278, and Glu281. Helical transmembrane passes span 282 to 302 (IFFF…YLFC), 329 to 349 (ALAT…HFLA), 396 to 416 (FTIF…LILA), 417 to 437 (TTIP…AAIG), 452 to 472 (IVTG…AGAA), and 486 to 506 (LLAF…MAVL). Residues 507–687 (AANAIAQSCQ…SNLTNPPAPK (181 aa)) lie on the Cytoplasmic side of the membrane. CBS domains are found at residues 551-609 (MNHS…EPPS) and 626-684 (CPTE…TNPP).

The protein belongs to the chloride channel (TC 2.A.49) family. CLCNKA subfamily. Homodimer. Interacts with BSND.

It is found in the basolateral cell membrane. The enzyme catalyses chloride(in) = chloride(out). The catalysed reaction is bromide(in) = bromide(out). It catalyses the reaction nitrate(in) = nitrate(out). It carries out the reaction iodide(out) = iodide(in). With respect to regulation, activated by extracellular Ca(2+) and inhibited by extracellular acidic pH. Functionally, anion-selective channel permeable to small monovalent anions with ion selectivity for chloride &gt; bromide &gt; nitrate &gt; iodide. Forms a homodimeric channel where each subunit has its own ion conduction pathway. May conduct double-barreled currents controlled by two types of gates, two fast gates that control each subunit independently and a slow common gate that opens and shuts off both subunits simultaneously. Assembles with the regulatory subunit BSND/Barttin for sorting at the basolateral plasma membrane domain and functional switch to the ion conducting state. CLCNKA:BSND channels display mostly a linear current-voltage relationship with fast gating at negative potentials. Mediates transepithelial chloride transport from the lumen to interstitial compartment along the thin ascending limb of Henle's loop, contributing to generation of hypertonic medullary interstitium as a countercurrent system to achieve urine concentration. Conducts chloride currents in the stria vascularis of the inner ear to establish the endocochlear potential necessary for normal hearing. The sequence is that of Chloride channel protein ClC-Ka from Homo sapiens (Human).